A 286-amino-acid chain; its full sequence is Bifunctional protein FolD (286 aa).

NADP(+)-binding positions include 166 to 168 (GAS) and Ile-232.

Belongs to the tetrahydrofolate dehydrogenase/cyclohydrolase family. As to quaternary structure, homodimer.

It catalyses the reaction (6R)-5,10-methylene-5,6,7,8-tetrahydrofolate + NADP(+) = (6R)-5,10-methenyltetrahydrofolate + NADPH. The catalysed reaction is (6R)-5,10-methenyltetrahydrofolate + H2O = (6R)-10-formyltetrahydrofolate + H(+). It participates in one-carbon metabolism; tetrahydrofolate interconversion. Catalyzes the oxidation of 5,10-methylenetetrahydrofolate to 5,10-methenyltetrahydrofolate and then the hydrolysis of 5,10-methenyltetrahydrofolate to 10-formyltetrahydrofolate. This is Bifunctional protein FolD from Shewanella woodyi (strain ATCC 51908 / MS32).